A 110-amino-acid chain; its full sequence is uncharacterized protein (110 aa).

It is found in the mitochondrion. This is an uncharacterized protein from Arabidopsis thaliana (Mouse-ear cress).